Here is a 385-residue protein sequence, read N- to C-terminus: MSSTVLVINSGSSSLKFQLVEPVAGMSRAAGIVERIGERSSPVADHAQALHRAFKMLAEDGIDLQTCGLVAVGHRVVHGGTEFHQPTLLDDTVIGKLEELSALAPLHNPPAVLGIKVARRLLANVAHVAVFDTAFFHDLPPAAATYAIDRDVADRWHIRRYGFHGTSHQYVSERAAAFLGRPLDGLNQIVLHLGNGASASAIARGRPVETSMGLTPLEGLVMGTRSGDLDPGVISYLWRTARMGVEDIESMLNHRSGMLGLAGERDFRRLRLVIETGDRSAQLAYEVFIHRLRKYLGAYLAVLGHTDVVSFTAGIGENDAAVRRDALAGLQGLGIALDQDRNLGPGHGARRISSDDSPIAVLVVPTNEELAIARDCLRVLGGRRA.

Residue N9 participates in Mg(2+) binding. Residue K16 participates in ATP binding. R75 lines the substrate pocket. The Proton donor/acceptor role is filled by D132. Residues 192-196 (HLGNG), 266-268 (DFR), and 314-318 (GIGEN) contribute to the ATP site. E368 is a Mg(2+) binding site.

The protein belongs to the acetokinase family. Homodimer. The cofactor is Mg(2+). Requires Mn(2+) as cofactor.

It localises to the cytoplasm. It carries out the reaction acetate + ATP = acetyl phosphate + ADP. The protein operates within metabolic intermediate biosynthesis; acetyl-CoA biosynthesis; acetyl-CoA from acetate: step 1/2. Its function is as follows. Catalyzes the formation of acetyl phosphate from acetate and ATP. Can also catalyze the reverse reaction. This chain is Acetate kinase, found in Mycobacterium bovis (strain ATCC BAA-935 / AF2122/97).